We begin with the raw amino-acid sequence, 289 residues long: Fumagillin beta-trans-bergamotene synthase af520 (289 aa).

Transmembrane regions (helical) follow at residues 35–55 (AVALVLAAPCSFHLIIKGFLW), 95–115 (TLLYRVLFFLMWVAAVYTNTI), 142–162 (LIGAIGLGCYCWGTTIIFDGG), 165–185 (LHGLKAVAVLMIVGIFATTGH), 222–242 (AWTIGLIALWKPPAIVTLAYV), and 262–282 (YVSYCWYGFWLLGSNILPIFP).

Belongs to the paxB family.

It localises to the membrane. The catalysed reaction is (2E,6E)-farnesyl diphosphate = (+)-exo-beta-bergamotene + diphosphate. It functions in the pathway secondary metabolite biosynthesis; terpenoid biosynthesis. In terms of biological role, beta-trans-bergamotene synthase; part of the gene cluster that mediates the biosynthesis of fumagillin, a meroterpenoid that has numerous biological activities including irreversible inhibition of human type 2 methionine aminopeptidase (METAP2). Within the pathway, the membrane-bound fumagillin beta-trans-bergamotene synthase af520 converts farnesyl pyrophosphate (FPP) to beta-trans-bergamotene. The pathway begins with the conversion of FPP to beta-trans-bergamotene by af520. The multifunctional cytochrome P450 monooxygenase af510 then converts beta-trans-bergamotene into 5-keto-demethoxyfumagillol via several oxydation steps. 5-keto-demethoxyfumagillol is then subjected to successive C-6 hydroxylation and O-methylation by the dioxygenase af480 and O-methyltransferase af390-400, respectively, to yield 5-keto-fumagillol, which is then stereoselectively reduced by the keto-reductase af490 to 5R-hydroxy-seco-sesquiterpene. The next step is the polyketide transferase af380-catalyzed transfer of a dodecapentaenoyl group synthesized by the polyketide synthase af370 onto 5R-hydroxy-seco-sesquiterpene which leads to the production of prefumagillin. Finally, oxidative cleavage by the monooxygenase af470 converts prefumagillin to fumagillin. The chain is Fumagillin beta-trans-bergamotene synthase af520 from Aspergillus fumigatus (strain ATCC MYA-4609 / CBS 101355 / FGSC A1100 / Af293) (Neosartorya fumigata).